The primary structure comprises 333 residues: B3 domain-containing protein At1g32030 (333 aa).

Composition is skewed to polar residues over residues 76-99 (VTVR…SLLD) and 134-143 (PQNASSSSTL). The segment at 76–179 (VTVRNPEQNQ…SEPKKAKTPY (104 aa)) is disordered. Positions 220-328 (QSRLLMPFNT…ILSFALVLPP (109 aa)) form a DNA-binding region, TF-B3.

The protein localises to the nucleus. The protein is B3 domain-containing protein At1g32030 of Arabidopsis thaliana (Mouse-ear cress).